The sequence spans 389 residues: Growth/differentiation factor 2 (389 aa).

The first 20 residues, 1–20 (MWRVGHLLLLMSIVFRITEE), serve as a signal peptide directing secretion. Residues 21–280 (KSLGDAGSLE…PVSNRHRRRK (260 aa)) constitute a propeptide that is removed on maturation. Asn-65, Asn-118, Asn-127, and Asn-232 each carry an N-linked (GlcNAc...) asparagine glycan. The span at 263–272 (QQQVGNQAPV) shows a compositional bias: polar residues. Residues 263–284 (QQQVGNQAPVSNRHRRRKRKAK) are disordered. The span at 274–284 (NRHRRRKRKAK) shows a compositional bias: basic residues. Disulfide bonds link Cys-288-Cys-354, Cys-317-Cys-386, and Cys-321-Cys-388. An N-linked (GlcNAc...) asparagine glycan is attached at Asn-342.

It belongs to the TGF-beta family. Homodimer; disulfide-linked. A reversible disulfide bond can be formed between the two subunits in the homodimer; this has no effect on gdf2 activity.

It is found in the secreted. Potent circulating inhibitor of angiogenesis. Signals through the type I activin receptor ACVRL1 but not other Alks. Signaling through SMAD1 in endothelial cells requires TGF-beta coreceptor endoglin/eng. The protein is Growth/differentiation factor 2 (gdf2) of Danio rerio (Zebrafish).